The primary structure comprises 71 residues: High-potential iron-sulfur protein (71 aa).

Residue Gln1 is modified to Pyrrolidone carboxylic acid. [4Fe-4S] cluster is bound by residues Cys37, Cys40, Cys50, and Cys64.

Belongs to the high-potential iron-sulfur protein (HiPIP) family. As to quaternary structure, homodimer.

Its function is as follows. Specific class of high-redox-potential 4Fe-4S ferredoxins. Functions in anaerobic electron transport in most purple and in some other photosynthetic bacteria and in at least one genus (Paracoccus) of halophilic, denitrifying bacteria. The protein is High-potential iron-sulfur protein (hip) of Halomonas halodenitrificans (strain ATCC 12084 / NCIMB 8669) (Paracoccus halodenitrificans).